We begin with the raw amino-acid sequence, 457 residues long: tRNA modification GTPase MnmE (457 aa).

(6S)-5-formyl-5,6,7,8-tetrahydrofolate contacts are provided by R25, E87, and R126. Positions 223-377 constitute a TrmE-type G domain; the sequence is GIATAIIGRP…IEEKINQLFF (155 aa). N233 is a K(+) binding site. GTP-binding positions include 233–238, 252–258, and 277–280; these read NVGKSS, TDIAGTT, and DTAG. Residue S237 coordinates Mg(2+). The K(+) site is built by T252, I254, and T257. A Mg(2+)-binding site is contributed by T258. K457 serves as a coordination point for (6S)-5-formyl-5,6,7,8-tetrahydrofolate.

It belongs to the TRAFAC class TrmE-Era-EngA-EngB-Septin-like GTPase superfamily. TrmE GTPase family. Homodimer. Heterotetramer of two MnmE and two MnmG subunits. K(+) serves as cofactor.

It localises to the cytoplasm. Exhibits a very high intrinsic GTPase hydrolysis rate. Involved in the addition of a carboxymethylaminomethyl (cmnm) group at the wobble position (U34) of certain tRNAs, forming tRNA-cmnm(5)s(2)U34. The chain is tRNA modification GTPase MnmE from Streptococcus suis (strain 98HAH33).